A 227-amino-acid chain; its full sequence is Orotate phosphoribosyltransferase (227 aa).

Lys34 is a 5-phospho-alpha-D-ribose 1-diphosphate binding site. 42–43 (FF) provides a ligand contact to orotate. Residues 80-81 (YK), Arg106, Lys107, Lys110, His112, and 131-139 (DDVISAGTS) each bind 5-phospho-alpha-D-ribose 1-diphosphate. Residues Ser135 and Arg163 each coordinate orotate.

It belongs to the purine/pyrimidine phosphoribosyltransferase family. PyrE subfamily. As to quaternary structure, homodimer. Mg(2+) is required as a cofactor.

The catalysed reaction is orotidine 5'-phosphate + diphosphate = orotate + 5-phospho-alpha-D-ribose 1-diphosphate. Its pathway is pyrimidine metabolism; UMP biosynthesis via de novo pathway; UMP from orotate: step 1/2. Its function is as follows. Catalyzes the transfer of a ribosyl phosphate group from 5-phosphoribose 1-diphosphate to orotate, leading to the formation of orotidine monophosphate (OMP). The protein is Orotate phosphoribosyltransferase of Cupriavidus necator (strain ATCC 17699 / DSM 428 / KCTC 22496 / NCIMB 10442 / H16 / Stanier 337) (Ralstonia eutropha).